We begin with the raw amino-acid sequence, 467 residues long: Zinc finger protein mex-6 (467 aa).

Composition is skewed to low complexity over residues 1-22 (MTAT…ATAQ) and 179-195 (STTR…LPTS). Disordered regions lie at residues 1–35 (MTAT…QQHP) and 163–209 (TNPQ…NRNS). Position 190 is a phosphothreonine (Thr-190). Residues 196–207 (REYETVQRDRNR) are compositionally biased toward basic and acidic residues. C3H1-type zinc fingers lie at residues 273 to 302 (NFKT…HGLK) and 317 to 347 (KYKT…HPSD). The interval 425–451 (INENDLPPHLRRIRRGNPPVTRSRPSF) is disordered. Ser-457 bears the Phosphoserine mark.

As to quaternary structure, interacts (probably when phosphorylated on Thr-190) with plk-1 (via POLO box domain) and plk-2 (via POLO box domain). Post-translationally, phosphorylation on Ser-457 by par-1 promotes localization of the protein to the anterior cytoplasm of the zygote.

It is found in the cytoplasm. In terms of biological role, functions with mex-5 to affect embryonic viability, establish soma germline asymmetry in embryos and establish plk-1, pie-1, mex-1, and pos-1 asymmetry in embryos. Also affects formation of intestinal cells. In Caenorhabditis elegans, this protein is Zinc finger protein mex-6 (mex-6).